We begin with the raw amino-acid sequence, 368 residues long: Quinolinate synthase (368 aa).

Iminosuccinate is bound by residues His-46 and Ser-63. Residue Cys-110 coordinates [4Fe-4S] cluster. Iminosuccinate-binding positions include 141–143 (YVN) and Ser-162. Residue Cys-230 coordinates [4Fe-4S] cluster. Iminosuccinate contacts are provided by residues 256–258 (HPE) and Thr-273. Cys-320 serves as a coordination point for [4Fe-4S] cluster.

It belongs to the quinolinate synthase family. Type 3 subfamily. The cofactor is [4Fe-4S] cluster.

It localises to the cytoplasm. It catalyses the reaction iminosuccinate + dihydroxyacetone phosphate = quinolinate + phosphate + 2 H2O + H(+). Its pathway is cofactor biosynthesis; NAD(+) biosynthesis; quinolinate from iminoaspartate: step 1/1. Its function is as follows. Catalyzes the condensation of iminoaspartate with dihydroxyacetone phosphate to form quinolinate. The chain is Quinolinate synthase from Bacillus thuringiensis subsp. konkukian (strain 97-27).